A 356-amino-acid polypeptide reads, in one-letter code: Ubiquitin-conjugating enzyme E2 Z (356 aa).

Low complexity predominate over residues 1 to 16 (MAESPTEEAATATAGA). The tract at residues 1–22 (MAESPTEEAATATAGAGAAGPG) is disordered. A UBC core domain is found at 101-255 (QCLLRIKRDI…IRHETIRVAV (155 aa)). Cys190 (glycyl thioester intermediate) is an active-site residue. The segment at 334 to 356 (NAEMDSDSSSSGTETDLHGSLRV) is disordered. Phosphoserine is present on Ser339.

It belongs to the ubiquitin-conjugating enzyme family.

The protein resides in the cytoplasm. It is found in the nucleus. It carries out the reaction S-ubiquitinyl-[E1 ubiquitin-activating enzyme]-L-cysteine + [E2 ubiquitin-conjugating enzyme]-L-cysteine = [E1 ubiquitin-activating enzyme]-L-cysteine + S-ubiquitinyl-[E2 ubiquitin-conjugating enzyme]-L-cysteine.. It participates in protein modification; protein ubiquitination. Catalyzes the covalent attachment of ubiquitin to other proteins. Specific substrate for UBA6, not charged with ubiquitin by UBE1. May be involved in apoptosis regulation. This chain is Ubiquitin-conjugating enzyme E2 Z (Ube2z), found in Rattus norvegicus (Rat).